The following is a 389-amino-acid chain: Radial spoke head protein 3 homolog B (389 aa).

A disordered region spans residues 63–106 (PTGQVPGQPDPLELQRQQQARRRALARKRAQEQLKPRTPEPVEG). Residues 81–90 (QARRRALARK) show a composition bias toward basic residues. Basic and acidic residues predominate over residues 91-106 (RAQEQLKPRTPEPVEG). Thr143 bears the Phosphothreonine; by MAPK1 mark. Positions 206–242 (YEEIRNVELAEVQRLEEQERRHREEKERRKKQQWEIV) form a coiled coil. The tract at residues 332-389 (EAMPPGQKTNVINGPNTVTDPSVTTLHTQKPVLDRVSSQPAPSQERKPVEEGGHLMAE) is disordered. Positions 338–359 (QKTNVINGPNTVTDPSVTTLHT) are enriched in polar residues. Residues 375 to 389 (QERKPVEEGGHLMAE) show a composition bias toward basic and acidic residues.

It belongs to the flagellar radial spoke RSP3 family. Component of the axonemal radial spoke 1 (RS1) and 2 (RS2) complexes, at least composed of spoke head proteins RSPH1, RSPH3B, RSPH9 and the cilia-specific component RSPH4A or sperm-specific component RSPH6A, spoke stalk proteins RSPH14, DNAJB13, DYDC1, ROPN1L and NME5, and the RS1 complex-specific anchor protein IQUB. Interacts with IQUB. Interacts with phosphorylated MAPK1. Interacts with MEK1. Interacts with PKA regulatory subunits PRKAR1A and PRKAR1B. Interacts with RSPH1. Interacts with RSPH4A. Interacts with RSPH6A. Interacts with RSPH9. Interacts with LRRC23. Expressed in ependymal cells (at protein level).

It localises to the cytoplasm. The protein resides in the cytoskeleton. Its subcellular location is the cilium axoneme. The protein localises to the flagellum axoneme. Functions as part of axonemal radial spoke complexes that play an important part in the motility of sperm and cilia. Functions as a protein kinase A-anchoring protein that scaffolds the cAMP-dependent protein kinase holoenzyme. May serve as a point of convergence for MAPK and PKA signaling in cilia. The protein is Radial spoke head protein 3 homolog B (Rsph3b) of Mus musculus (Mouse).